The chain runs to 436 residues: MTQQTAQQEQQKSEVKIYSREELKQKTLAELQKIGKELGLTRTTGLKKEELIEKILKAQLEKSRLVFVKGVLEILPEGYGFLRMPENNYMPSWNDVYVAPSQIKKFGLRTGDTIEGFARLPRENEKYKALIRMESVNGLPPDPEILKRRPQFEKLTPLHPMERFKLEYDPNELSTRVVSLIAPIGKGQRGLIVAPPKAGKTVLLQKIAQAIIRNHPEVYLIILLIDERPEEVTEMRRIVKDKAEVVASTFDEPPERHMQVAEIVVEKAKRMVELKKDVVILMDSLTRFTRASNAVTPPTGRVLTGGIEITAFQRPKKFFGAARNIEEGGSLTIIATALVETGSKMDDVIYEEFKGTGNMEIHLDRRLMERRIFPAINIEKSGTRKEELLLEPWELQRIWVLRKFLSTMDPVEAMEFLLEKLRRFKTNEEFLKAMNA.

The Rho RNA-BD domain maps to 65-140; that stretch reads LVFVKGVLEI…IRMESVNGLP (76 aa). ATP contacts are provided by residues 185–190, 197–202, and arginine 228; these read GKGQRG and KAGKTV.

The protein belongs to the Rho family. As to quaternary structure, homohexamer. The homohexamer assembles into an open ring structure.

Facilitates transcription termination by a mechanism that involves Rho binding to the nascent RNA, activation of Rho's RNA-dependent ATPase activity, and release of the mRNA from the DNA template. This is Transcription termination factor Rho from Aquifex aeolicus (strain VF5).